A 221-amino-acid polypeptide reads, in one-letter code: N-(5'-phosphoribosyl)anthranilate isomerase (221 aa).

Belongs to the TrpF family.

It carries out the reaction N-(5-phospho-beta-D-ribosyl)anthranilate = 1-(2-carboxyphenylamino)-1-deoxy-D-ribulose 5-phosphate. It participates in amino-acid biosynthesis; L-tryptophan biosynthesis; L-tryptophan from chorismate: step 3/5. The protein is N-(5'-phosphoribosyl)anthranilate isomerase of Geobacillus thermodenitrificans (strain NG80-2).